The following is a 387-amino-acid chain: Migration and invasion-inhibitory protein (387 aa).

Residues 50–59 (NLEMPLSQET) are compositionally biased toward polar residues. Disordered stretches follow at residues 50–80 (NLEMPLSQETSSASSVAPSSQDKRHMLDPLD) and 133–172 (VSLGGPKGLGPDKTQVPRSILSRLSKPSKPRVTSQESAVP). The span at 60 to 69 (SSASSVAPSS) shows a compositional bias: low complexity. Over residues 70 to 80 (QDKRHMLDPLD) the composition is skewed to basic and acidic residues. At serine 307 the chain carries Phosphoserine.

As to quaternary structure, interacts with IGFBP2.

Functionally, inhibits glioma cells invasion and down-regulates adhesion- and motility-associated genes such as NFKB2 and ICAM1. Exhibits opposing effects to IGFBP2 on cell invasion. In Mus musculus (Mouse), this protein is Migration and invasion-inhibitory protein (Miip).